An 836-amino-acid chain; its full sequence is Conserved oligomeric Golgi complex subunit 7 (836 aa).

Coiled coils occupy residues 29-49 (QDSL…ASEE) and 107-127 (LARV…LQDA). Residues 246-265 (KLANERSESQRLSSGDEFQS) are disordered.

The protein belongs to the COG7 family. In terms of assembly, component of the conserved oligomeric Golgi complex which is composed of eight different subunits and is required for normal Golgi morphology and localization. Interacts with COG5 and COG6.

The protein resides in the golgi apparatus membrane. Required for normal Golgi function. Necessary for embryo development and pigmentation, especially for the expansion of cells and organs, and for the formation of the organized shoot apical meristem (SAM). Probably involved in the generation of the extra-cellular matrix. The sequence is that of Conserved oligomeric Golgi complex subunit 7 from Arabidopsis thaliana (Mouse-ear cress).